We begin with the raw amino-acid sequence, 389 residues long: Phospho-N-acetylmuramoyl-pentapeptide-transferase (389 aa).

The next 10 membrane-spanning stretches (helical) occupy residues 25-45 (RAVM…PWVI), 73-93 (TMGG…WGDL), 97-117 (FIWI…VDDY), 135-155 (FWQS…VSEA), 190-210 (ISYP…IVGA), 222-242 (GLVI…AYVM), 258-278 (GAGE…AFLW), 286-306 (VFMG…VAVI), 311-331 (IVLF…MLQV), and 366-386 (QVVV…LSTL).

Belongs to the glycosyltransferase 4 family. MraY subfamily. Mg(2+) is required as a cofactor.

Its subcellular location is the cell inner membrane. The catalysed reaction is UDP-N-acetyl-alpha-D-muramoyl-L-alanyl-gamma-D-glutamyl-meso-2,6-diaminopimeloyl-D-alanyl-D-alanine + di-trans,octa-cis-undecaprenyl phosphate = di-trans,octa-cis-undecaprenyl diphospho-N-acetyl-alpha-D-muramoyl-L-alanyl-D-glutamyl-meso-2,6-diaminopimeloyl-D-alanyl-D-alanine + UMP. Its pathway is cell wall biogenesis; peptidoglycan biosynthesis. Catalyzes the initial step of the lipid cycle reactions in the biosynthesis of the cell wall peptidoglycan: transfers peptidoglycan precursor phospho-MurNAc-pentapeptide from UDP-MurNAc-pentapeptide onto the lipid carrier undecaprenyl phosphate, yielding undecaprenyl-pyrophosphoryl-MurNAc-pentapeptide, known as lipid I. In Burkholderia pseudomallei (strain 1106a), this protein is Phospho-N-acetylmuramoyl-pentapeptide-transferase.